Consider the following 208-residue polypeptide: MPRNSTNKQMAVLSFIHKQVDAHGYPPTVREICGAVGLSSTSTVHGHINRLIKKGYLKKDPSKPRALEITPAGLEVLGITPKQTQIPLLGVVAAGEPILAVQDATDFFPIPPSIPDHDDLFMLTIQGTSMINIGILNGDKVIVRRQETANNGDIVIAMTSDNEATCKRFFKEQGHIRLQPENDTLAPIILDDVTILGKVVGLFRDDIF.

The H-T-H motif DNA-binding region spans Val29 to Asn49. Catalysis depends on for autocatalytic cleavage activity residues Ser129 and Lys167.

It belongs to the peptidase S24 family. Homodimer.

The enzyme catalyses Hydrolysis of Ala-|-Gly bond in repressor LexA.. In terms of biological role, represses a number of genes involved in the response to DNA damage (SOS response), including recA and lexA. In the presence of single-stranded DNA, RecA interacts with LexA causing an autocatalytic cleavage which disrupts the DNA-binding part of LexA, leading to derepression of the SOS regulon and eventually DNA repair. The polypeptide is LexA repressor (Limosilactobacillus fermentum (strain NBRC 3956 / LMG 18251) (Lactobacillus fermentum)).